A 104-amino-acid chain; its full sequence is Large ribosomal subunit protein uL23 (104 aa).

The protein belongs to the universal ribosomal protein uL23 family. Part of the 50S ribosomal subunit. Contacts protein L29, and trigger factor when it is bound to the ribosome.

Its function is as follows. One of the early assembly proteins it binds 23S rRNA. One of the proteins that surrounds the polypeptide exit tunnel on the outside of the ribosome. Forms the main docking site for trigger factor binding to the ribosome. The polypeptide is Large ribosomal subunit protein uL23 (Leptospira borgpetersenii serovar Hardjo-bovis (strain JB197)).